The chain runs to 467 residues: Acetaldehyde dehydrogenase (acetylating) EutE (467 aa).

A targets protein to the BMC region spans residues 1-19 (MNQQDIEQVVKAVLLKMKD).

Belongs to the EutE/PduP family. In terms of assembly, interacts with EutS, which targets it to the interior of the BMC.

Its subcellular location is the bacterial microcompartment. It catalyses the reaction acetaldehyde + NAD(+) + CoA = acetyl-CoA + NADH + H(+). Its pathway is amine and polyamine degradation; ethanolamine degradation. In terms of biological role, acts as the second step in ethanolamine degradation by converting acetaldehyde into acetyl-CoA. Has a very strong preference for NAD(+) over NADP(+) in both catalytic directions. May play a role in bacterial microcompartment (BMC) assembly or maintenance. Directly targeted to the BMC. Functionally, expression of the eut operon allows this bacteria to use ethanolamine (EA) as a carbon, nitrogen and energy source. It relies on cobalamin (vitamin B12) both as a cofactor for the ethanolamine ammonia-lyase (EAL) activity and to induce the operon. EA enhances bacterial survival in macrophages in a concentration-dependent manner, suggesting it is an important nutrient during infection. The chain is Acetaldehyde dehydrogenase (acetylating) EutE from Salmonella typhimurium (strain LT2 / SGSC1412 / ATCC 700720).